A 194-amino-acid polypeptide reads, in one-letter code: Thymidine kinase (194 aa).

ATP-binding positions include 9–16 and 85–88; these read GAMNSGKT and DECQ. The active-site Proton acceptor is the E86. Zn(2+)-binding residues include C143, C146, C180, and H183.

It belongs to the thymidine kinase family. As to quaternary structure, homotetramer.

It is found in the cytoplasm. It carries out the reaction thymidine + ATP = dTMP + ADP + H(+). This is Thymidine kinase from Enterococcus faecalis (strain ATCC 700802 / V583).